A 264-amino-acid chain; its full sequence is H-2 class II histocompatibility antigen, E-D beta chain (264 aa).

The N-terminal stretch at 1 to 31 is a signal peptide; that stretch reads MVWLPRVPCVAAVILLLTVLSPPVALVRDTR. Residues 32 to 121 are beta-1; the sequence is PRFLEYVTSE…ISDKFLVRRR (90 aa). The Extracellular segment spans residues 32-225; the sequence is PRFLEYVTSE…KAQSTSAQNK (194 aa). Disulfide bonds link Cys42–Cys106 and Cys144–Cys200. Asn46 carries N-linked (GlcNAc...) asparagine glycosylation. The tract at residues 122–215 is beta-2; the sequence is VEPTVTVYPT…SLTDPVTVEW (94 aa). Positions 124-214 constitute an Ig-like C1-type domain; that stretch reads PTVTVYPTKT…PSLTDPVTVE (91 aa). Residues 216-225 are connecting peptide; that stretch reads KAQSTSAQNK. The helical transmembrane segment at 226-248 threads the bilayer; it reads MLSGVGGFVLGLLFLGAGLFIYF. Residues 249-264 are Cytoplasmic-facing; the sequence is RNQKGQSGLQPTGLLS.

This sequence belongs to the MHC class II family.

The protein localises to the membrane. The sequence is that of H-2 class II histocompatibility antigen, E-D beta chain from Mus musculus (Mouse).